The following is a 206-amino-acid chain: Uridine kinase (206 aa).

11–18 (GGSASGKT) lines the ATP pocket.

The protein belongs to the uridine kinase family.

It is found in the cytoplasm. It catalyses the reaction uridine + ATP = UMP + ADP + H(+). The enzyme catalyses cytidine + ATP = CMP + ADP + H(+). Its pathway is pyrimidine metabolism; CTP biosynthesis via salvage pathway; CTP from cytidine: step 1/3. The protein operates within pyrimidine metabolism; UMP biosynthesis via salvage pathway; UMP from uridine: step 1/1. In Lactococcus lactis subsp. lactis (strain IL1403) (Streptococcus lactis), this protein is Uridine kinase.